Here is a 940-residue protein sequence, read N- to C-terminus: MSDYKFTLNLPETEFPMRGNLANREPEMLERWTKDGLYQQIRDSRIGRTPFILHDGPPYANGSIHIGHSVNKILKDIIVKSKTMSGFDAPYVPGWDCHGLPIELKVEQKVGKPGQKITAAEFREECRKYAAEQVNGQREDFIRLGVLGDWQNPYLTMDFSTEANIVRSLSKVIESGHLHKGVKPVHWCTDCGSALAEAEVEYEDKTSPAIDVAFVAADSKAVAAKFGVSDYSHPVSMVIWTTTPWTLPANRALSLSPELDYSLVEFEKDGVTQALILAEVLVESCLTRYNVESHTVLGTTKGAALELVCFNHPFLDFDVPAILGDHVTTDAGTGIVHTAPGHGQDDFVVGQKYGLEVANPVGDNGVYKPDTKYFAGQHVFKANDNVVALLREKGALLNHVAYRHSYPHCWRHKTPIIFRATPQWFISMDNHGLRTQALKEIEQTQWIPDWGQSRIEKMVENRPDWCISRQRTWGVPITLFVNRETEELHPDSVSLMERVANRIEQQGIQAWWDLDAAELLGDEADQYRKVTDTLDVWYDSGSTFSSVVAARPEFHGHGVDLYLEGSDQHRGWFMSSLMISTAMNGKAPYKQVLTHGFTVDGKGRKMSKSIGNVIAPQTVTNKLGADILRLWVAATDYSGEMTVSDEILNRSADAYRRIRNTARFLLANLNGFDPAKDLVAVEDMVALDRWVVRRAAALQQEIIEAYDQYNFHIVTQKLMQFCSVELGSFYLDIIKDRQYTAKQEGHARRSCQSALFHIAEAMVRWIAPVLSFTADEVWQLLPGERDAYVFTQEWYQGLKSVTLATDLSDDYWQQLLAVRNEVNKVIEQARRDKRIGGSLEAEVTLFADATLTEQLTHIGDELRFVLLTSEAKVLPLADATTEAVETELASLKLVVASSTAEKCERCWHHREEVGTIEAHPTLCTRCVTNIEGDGEVRQFA.

A 'HIGH' region motif is present at residues 58-68 (PYANGSIHIGH). Glu564 is a binding site for L-isoleucyl-5'-AMP. Residues 605-609 (KMSKS) carry the 'KMSKS' region motif. Lys608 provides a ligand contact to ATP. The Zn(2+) site is built by Cys903, Cys906, Cys923, and Cys926.

This sequence belongs to the class-I aminoacyl-tRNA synthetase family. IleS type 1 subfamily. As to quaternary structure, monomer. Zn(2+) serves as cofactor.

Its subcellular location is the cytoplasm. The enzyme catalyses tRNA(Ile) + L-isoleucine + ATP = L-isoleucyl-tRNA(Ile) + AMP + diphosphate. Catalyzes the attachment of isoleucine to tRNA(Ile). As IleRS can inadvertently accommodate and process structurally similar amino acids such as valine, to avoid such errors it has two additional distinct tRNA(Ile)-dependent editing activities. One activity is designated as 'pretransfer' editing and involves the hydrolysis of activated Val-AMP. The other activity is designated 'posttransfer' editing and involves deacylation of mischarged Val-tRNA(Ile). The polypeptide is Isoleucine--tRNA ligase (Shewanella putrefaciens (strain CN-32 / ATCC BAA-453)).